The chain runs to 188 residues: Acireductone dioxygenase (188 aa).

The Fe(2+) site is built by His-97, His-99, Glu-103, and His-141. The Ni(2+) site is built by His-97, His-99, Glu-103, and His-141.

The protein belongs to the acireductone dioxygenase (ARD) family. In terms of assembly, monomer. Fe(2+) is required as a cofactor. It depends on Ni(2+) as a cofactor.

The catalysed reaction is 1,2-dihydroxy-5-(methylsulfanyl)pent-1-en-3-one + O2 = 3-(methylsulfanyl)propanoate + CO + formate + 2 H(+). It carries out the reaction 1,2-dihydroxy-5-(methylsulfanyl)pent-1-en-3-one + O2 = 4-methylsulfanyl-2-oxobutanoate + formate + 2 H(+). The protein operates within amino-acid biosynthesis; L-methionine biosynthesis via salvage pathway; L-methionine from S-methyl-5-thio-alpha-D-ribose 1-phosphate: step 5/6. Catalyzes 2 different reactions between oxygen and the acireductone 1,2-dihydroxy-3-keto-5-methylthiopentene (DHK-MTPene) depending upon the metal bound in the active site. Fe-containing acireductone dioxygenase (Fe-ARD) produces formate and 2-keto-4-methylthiobutyrate (KMTB), the alpha-ketoacid precursor of methionine in the methionine recycle pathway. Ni-containing acireductone dioxygenase (Ni-ARD) produces methylthiopropionate, carbon monoxide and formate, and does not lie on the methionine recycle pathway. The chain is Acireductone dioxygenase from Xanthomonas axonopodis pv. citri (strain 306).